We begin with the raw amino-acid sequence, 478 residues long: Kynureninase (478 aa).

Residues L138, T139, 166-169 (FPSD), D252, H255, and Y277 each bind pyridoxal 5'-phosphate. K278 bears the N6-(pyridoxal phosphate)lysine mark. Pyridoxal 5'-phosphate is bound by residues W315 and N343.

Belongs to the kynureninase family. In terms of assembly, homodimer. Pyridoxal 5'-phosphate serves as cofactor.

The protein resides in the cytoplasm. The enzyme catalyses L-kynurenine + H2O = anthranilate + L-alanine + H(+). The catalysed reaction is 3-hydroxy-L-kynurenine + H2O = 3-hydroxyanthranilate + L-alanine + H(+). Its pathway is amino-acid degradation; L-kynurenine degradation; L-alanine and anthranilate from L-kynurenine: step 1/1. It participates in cofactor biosynthesis; NAD(+) biosynthesis; quinolinate from L-kynurenine: step 2/3. Its function is as follows. Catalyzes the cleavage of L-kynurenine (L-Kyn) and L-3-hydroxykynurenine (L-3OHKyn) into anthranilic acid (AA) and 3-hydroxyanthranilic acid (3-OHAA), respectively. The protein is Kynureninase of Coccidioides immitis (strain RS) (Valley fever fungus).